Consider the following 239-residue polypeptide: Purine nucleoside phosphorylase DeoD-type (239 aa).

H5 lines the a purine D-ribonucleoside pocket. Phosphate-binding positions include G21, R25, R44, and 88–91; that span reads RVGS. A purine D-ribonucleoside-binding positions include 180 to 182 and 204 to 205; these read EME and SD. The active-site Proton donor is the D205.

This sequence belongs to the PNP/UDP phosphorylase family. As to quaternary structure, homohexamer; trimer of homodimers.

It carries out the reaction a purine D-ribonucleoside + phosphate = a purine nucleobase + alpha-D-ribose 1-phosphate. The catalysed reaction is a purine 2'-deoxy-D-ribonucleoside + phosphate = a purine nucleobase + 2-deoxy-alpha-D-ribose 1-phosphate. In terms of biological role, catalyzes the reversible phosphorolytic breakdown of the N-glycosidic bond in the beta-(deoxy)ribonucleoside molecules, with the formation of the corresponding free purine bases and pentose-1-phosphate. This Salmonella heidelberg (strain SL476) protein is Purine nucleoside phosphorylase DeoD-type.